A 183-amino-acid chain; its full sequence is Potassium-transporting ATPase KdpC subunit (183 aa).

A helical transmembrane segment spans residues 10 to 30 (ASLLVLSLVTGVAYPLLVTGI).

This sequence belongs to the KdpC family. In terms of assembly, the system is composed of three essential subunits: KdpA, KdpB and KdpC.

The protein resides in the cell inner membrane. Functionally, part of the high-affinity ATP-driven potassium transport (or Kdp) system, which catalyzes the hydrolysis of ATP coupled with the electrogenic transport of potassium into the cytoplasm. This subunit acts as a catalytic chaperone that increases the ATP-binding affinity of the ATP-hydrolyzing subunit KdpB by the formation of a transient KdpB/KdpC/ATP ternary complex. The protein is Potassium-transporting ATPase KdpC subunit of Pseudomonas aeruginosa (strain UCBPP-PA14).